A 92-amino-acid polypeptide reads, in one-letter code: Signal recognition particle 19 kDa protein (92 aa).

It belongs to the SRP19 family. In terms of assembly, part of the signal recognition particle protein translocation system, which is composed of SRP and FtsY. Archaeal SRP consists of a 7S RNA molecule of 300 nucleotides and two protein subunits: SRP54 and SRP19.

It localises to the cytoplasm. Involved in targeting and insertion of nascent membrane proteins into the cytoplasmic membrane. Binds directly to 7S RNA and mediates binding of the 54 kDa subunit of the SRP. The sequence is that of Signal recognition particle 19 kDa protein from Halorubrum lacusprofundi (strain ATCC 49239 / DSM 5036 / JCM 8891 / ACAM 34).